The sequence spans 116 residues: Large ribosomal subunit protein uL18 (116 aa).

It belongs to the universal ribosomal protein uL18 family. Part of the 50S ribosomal subunit; part of the 5S rRNA/L5/L18/L25 subcomplex. Contacts the 5S and 23S rRNAs.

In terms of biological role, this is one of the proteins that bind and probably mediate the attachment of the 5S RNA into the large ribosomal subunit, where it forms part of the central protuberance. The sequence is that of Large ribosomal subunit protein uL18 from Psychromonas ingrahamii (strain DSM 17664 / CCUG 51855 / 37).